The primary structure comprises 662 residues: DNA ligase (662 aa).

NAD(+) is bound by residues aspartate 31–aspartate 35, serine 79–leucine 80, and glutamate 119. The N6-AMP-lysine intermediate role is filled by lysine 121. Residues arginine 142, glutamate 176, lysine 288, and lysine 312 each contribute to the NAD(+) site. Residues cysteine 405, cysteine 408, cysteine 421, and cysteine 427 each coordinate Zn(2+). The 80-residue stretch at asparagine 583 to leucine 662 folds into the BRCT domain.

This sequence belongs to the NAD-dependent DNA ligase family. LigA subfamily. It depends on Mg(2+) as a cofactor. Mn(2+) is required as a cofactor.

It catalyses the reaction NAD(+) + (deoxyribonucleotide)n-3'-hydroxyl + 5'-phospho-(deoxyribonucleotide)m = (deoxyribonucleotide)n+m + AMP + beta-nicotinamide D-nucleotide.. Its function is as follows. DNA ligase that catalyzes the formation of phosphodiester linkages between 5'-phosphoryl and 3'-hydroxyl groups in double-stranded DNA using NAD as a coenzyme and as the energy source for the reaction. It is essential for DNA replication and repair of damaged DNA. The sequence is that of DNA ligase from Finegoldia magna (strain ATCC 29328 / DSM 20472 / WAL 2508) (Peptostreptococcus magnus).